The primary structure comprises 315 residues: MNLAYIPSPTFSKFEIGPFTIHMYAICILIGICVAVWILTTRWKRYGGTFDQILDTTLVTVPCALVGARLYHCITTPADYFPPTGNLVNILKVWEGGMAIFGGISVGTLVAFLWCRHKHYPFAIFADAIAPALPVAQAIGRLGNWFNQELYGWPTTLPWGLKLNDADAIGKSEICYSGAQCPDYRTTLFHPTFLYEMIWNLIGAALIIYLGHKLADRLKAGQQFAMYLMWYGLGRTWIENVRINYSTVILGLRTNVWTAIIVFVLGCILFVVLYQYGPDPKAQARGLAAVTADELERQSIEEEQLRQKKQAKRTK.

The next 2 helical transmembrane spans lie at 19–39 (FTIH…VWIL) and 93–113 (VWEG…VAFL). An a 1,2-diacyl-sn-glycero-3-phospho-(1'-sn-glycerol)-binding site is contributed by Arg141. 2 helical membrane-spanning segments follow: residues 188 to 208 (LFHP…ALII) and 256 to 276 (VWTA…LYQY).

The protein belongs to the Lgt family.

Its subcellular location is the cell membrane. The catalysed reaction is L-cysteinyl-[prolipoprotein] + a 1,2-diacyl-sn-glycero-3-phospho-(1'-sn-glycerol) = an S-1,2-diacyl-sn-glyceryl-L-cysteinyl-[prolipoprotein] + sn-glycerol 1-phosphate + H(+). Its pathway is protein modification; lipoprotein biosynthesis (diacylglyceryl transfer). Its function is as follows. Catalyzes the transfer of the diacylglyceryl group from phosphatidylglycerol to the sulfhydryl group of the N-terminal cysteine of a prolipoprotein, the first step in the formation of mature lipoproteins. The polypeptide is Phosphatidylglycerol--prolipoprotein diacylglyceryl transferase (Bifidobacterium longum (strain DJO10A)).